The sequence spans 962 residues: MSYHFNKIEEKWQKYWADNQTFKASNDSEKPKYYVLDMFPYPSGAGLHVGHPLGYIASDIYARFKRHKGFNVLHPQGYDSFGLPAEQYAIQTGQHPAVTTENNIARYREQLDKIGFSFDWSREVRTSEPDYYKWTQWIFIQLFESWYDQEAEKSRAITELEEIFTSEGNSRINAASDDDVEKFSADDWNACSEDEKEQILLKYRLTYLAEAEVNWCPQLGTVLANDEIVNGVSERGGYPVVRKKMTQWSMRISAFSERLLQDLNKIDWTESLKESQRNWIGKSVGAHVDFKIENSKFKIGVFTTRPDTIFGVSFMTLAPEHELVEKITTEDRKEEVQAYIEASAKRSERERMADVKTISGAFTGAYAEHPFTKKPVPIWIGDYVLAGYGTGAVMAVPCGDQRDHDFARHFDLLIPNIFENVDVSQEAYAGKEGTVIANSDFLSGLEYKEALNKVILELEKTGQGYGKTNYRLRDAVFSRQRYWGEPFPVYYVNGLPKMIDEKYLPLKLPEVEKYLPTETGEPPLGNATDWAWDSKNNKVVSNKVLKQSRKLSGQHDEPNSNVTPSAVEGSDDNGIYPLELNTMPGWAGSSWYLFRYMGAGNPDRFVSEEAQKYWENVDLYIGGSEHATGHLLYSRFWTKFLYDRGWLTVEEPFKKLINQGMILGTSAFVYRLEGENVFVSKNQINGNNVQPIHADVSLVNSSDELDIEGFKKWRPEFADAKFLTEDGKYIVGREVEKMSKSKYNVVNPDEICQDYGADTLRMYEMFLGPLEQAKPWNTAGITGVHNFLKKLWKLYYDGEEFFVSDEKASADSLKTFHKTIKKVTEDIEEFSFNTSVSTFMICVNELTAQKCNSREILEPLAVLIAPYAPHIAEELWEKLGNSESVTTAKYPEFEEKYLVESMKNYPVSFNGKMRFTMELSLDMSKEEIEKTVMADERTQKQLDGRTPKKVIVVPGKIVNIVG.

The 'HIGH' region motif lies at 40-51 (PYPSGAGLHVGH). The disordered stretch occupies residues 548–570 (SRKLSGQHDEPNSNVTPSAVEGS). The 'KMSKS' region motif lies at 737–741 (KMSKS). Residue lysine 740 coordinates ATP.

The protein belongs to the class-I aminoacyl-tRNA synthetase family.

Its subcellular location is the cytoplasm. It carries out the reaction tRNA(Leu) + L-leucine + ATP = L-leucyl-tRNA(Leu) + AMP + diphosphate. This chain is Leucine--tRNA ligase, found in Christiangramia forsetii (strain DSM 17595 / CGMCC 1.15422 / KT0803) (Gramella forsetii).